The primary structure comprises 316 residues: 4-hydroxy-3-methylbut-2-enyl diphosphate reductase (316 aa).

A [4Fe-4S] cluster-binding site is contributed by C17. (2E)-4-hydroxy-3-methylbut-2-enyl diphosphate is bound by residues H46 and H79. Dimethylallyl diphosphate contacts are provided by H46 and H79. Positions 46 and 79 each coordinate isopentenyl diphosphate. C101 lines the [4Fe-4S] cluster pocket. H129 contacts (2E)-4-hydroxy-3-methylbut-2-enyl diphosphate. H129 provides a ligand contact to dimethylallyl diphosphate. H129 provides a ligand contact to isopentenyl diphosphate. E131 (proton donor) is an active-site residue. T170 serves as a coordination point for (2E)-4-hydroxy-3-methylbut-2-enyl diphosphate. A [4Fe-4S] cluster-binding site is contributed by C200. Positions 228, 229, 230, and 273 each coordinate (2E)-4-hydroxy-3-methylbut-2-enyl diphosphate. Dimethylallyl diphosphate is bound by residues S228, S229, N230, and S273. S228, S229, N230, and S273 together coordinate isopentenyl diphosphate.

This sequence belongs to the IspH family. It depends on [4Fe-4S] cluster as a cofactor.

It catalyses the reaction isopentenyl diphosphate + 2 oxidized [2Fe-2S]-[ferredoxin] + H2O = (2E)-4-hydroxy-3-methylbut-2-enyl diphosphate + 2 reduced [2Fe-2S]-[ferredoxin] + 2 H(+). It carries out the reaction dimethylallyl diphosphate + 2 oxidized [2Fe-2S]-[ferredoxin] + H2O = (2E)-4-hydroxy-3-methylbut-2-enyl diphosphate + 2 reduced [2Fe-2S]-[ferredoxin] + 2 H(+). Its pathway is isoprenoid biosynthesis; dimethylallyl diphosphate biosynthesis; dimethylallyl diphosphate from (2E)-4-hydroxy-3-methylbutenyl diphosphate: step 1/1. It functions in the pathway isoprenoid biosynthesis; isopentenyl diphosphate biosynthesis via DXP pathway; isopentenyl diphosphate from 1-deoxy-D-xylulose 5-phosphate: step 6/6. Catalyzes the conversion of 1-hydroxy-2-methyl-2-(E)-butenyl 4-diphosphate (HMBPP) into a mixture of isopentenyl diphosphate (IPP) and dimethylallyl diphosphate (DMAPP). Acts in the terminal step of the DOXP/MEP pathway for isoprenoid precursor biosynthesis. This Roseobacter denitrificans (strain ATCC 33942 / OCh 114) (Erythrobacter sp. (strain OCh 114)) protein is 4-hydroxy-3-methylbut-2-enyl diphosphate reductase.